The sequence spans 158 residues: Protein Smg homolog (158 aa).

This sequence belongs to the Smg family.

The polypeptide is Protein Smg homolog (Vibrio atlanticus (strain LGP32) (Vibrio splendidus (strain Mel32))).